Reading from the N-terminus, the 1528-residue chain is Rho GTPase-activating protein 7 (1528 aa).

3 disordered regions span residues Asp-72–Glu-94, Met-288–Val-310, and Ala-372–Lys-436. Positions Leu-81 to Glu-94 are enriched in basic and acidic residues. Low complexity predominate over residues Ser-374–Thr-384. The segment covering Gly-396 to Lys-436 has biased composition (polar residues). The 68-residue stretch at Lys-448–Glu-515 folds into the SAM domain. Ser-523, Ser-526, and Ser-566 each carry phosphoserine. Disordered stretches follow at residues Pro-558 to Arg-617, Arg-732 to Ser-764, Pro-829 to Leu-876, and Ser-928 to Ala-990. 2 stretches are compositionally biased toward low complexity: residues Val-591 to Ser-605 and Val-734 to Thr-760. Residues Gln-710–Gly-884 are focal adhesion-targeting (FAT). Ser-757 is modified (phosphoserine). Residues Leu-851–Glu-862 show a composition bias toward basic and acidic residues. A compositionally biased stretch (polar residues) spans Ala-936–Lys-948. The segment covering Ile-950 to Thr-960 has biased composition (basic and acidic residues). Residues Pro-961 to Asn-972 show a composition bias toward polar residues. Positions Lys-1051–Arg-1073 are polybasic cluster (PBR). One can recognise a Rho-GAP domain in the interval Val-1078–Phe-1284. Residues Gly-1314–Glu-1521 form the START domain.

As to quaternary structure, interacts with EF1A1, facilitates EF1A1 distribution to the membrane periphery and ruffles upon growth factor stimulation and suppresses cell migration. Interacts with tensin TNS1 (via N-terminus); the interaction is decreased by phosphorylation of TNS1. Interacts with TNS3 and PTEN; in resting cells, interacts with TNS3 (via C2 tensin-type domain) but, following growth factor stimulation, TNS3 and PTEN are phosphorylated which leads to weakened interaction with TNS3 and enhanced interaction with PTEN. Interacts (via C-terminus) with tensin TNS4 (via SH2 domain); the interaction is independent of tyrosine phosphorylation of DLC1. As to expression, highest level of expression in the spleen, with rather lower levels in prostate, testis, ovary, small intestine and colon, but none in the thymus.

It localises to the cytoplasm. Its subcellular location is the cell junction. It is found in the focal adhesion. The protein localises to the membrane. Functions as a GTPase-activating protein for the small GTPases RHOA, RHOB, RHOC and CDC42, terminating their downstream signaling. This induces morphological changes and detachment through cytoskeletal reorganization, playing a critical role in biological processes such as cell migration and proliferation. Also functions in vivo as an activator of the phospholipase PLCD1. Active DLC1 increases cell migration velocity but reduces directionality. Required for growth factor-induced epithelial cell migration; in resting cells, interacts with TNS3 while PTEN interacts with the p85 regulatory subunit of the PI3K kinase complex but growth factor stimulation induces phosphorylation of TNS3 and PTEN, causing them to change their binding preference so that PTEN interacts with DLC1 and TNS3 interacts with p85. The PTEN-DLC1 complex translocates to the posterior of migrating cells to activate RHOA while the TNS3-p85 complex translocates to the leading edge of migrating cells to promote RAC1 activation. The chain is Rho GTPase-activating protein 7 (DLC1) from Homo sapiens (Human).